The primary structure comprises 677 residues: Sulfate transporter 2.1 (677 aa).

Residues 1-118 (MKERDSESFE…NYKLTMFKND (118 aa)) are Cytoplasmic-facing. Positions 23–54 (STHMIQMAMANSGSSAAAQAGQDQPDRSKWLL) are disordered. Residues 28-44 (QMAMANSGSSAAAQAGQ) show a composition bias toward low complexity. Residues 119–139 (LMAGLTLASLCIPQSIGYATL) traverse the membrane as a helical segment. The Extracellular segment spans residues 140–141 (AK). The helical transmembrane segment at 142–162 (LDPQYGLYTSVVPPLIYALMG) threads the bilayer. The Cytoplasmic segment spans residues 163–166 (TSRE). Residues 167 to 187 (IAIGPVAVVSLLISSMLQKLI) traverse the membrane as a helical segment. The Extracellular segment spans residues 188-198 (DPETDPLGYKK). Residues 199-219 (LVLTTTFFAGIFQASFGLFRL) form a helical membrane-spanning segment. Topologically, residues 220 to 221 (GF) are cytoplasmic. A helical membrane pass occupies residues 222–242 (LVDFLSHAAIVGFMGGAAIVI). The Extracellular portion of the chain corresponds to 243 to 278 (GLQQLKGLLGITNFTTNTDIVSVLRAVWRSCQQQWS). Asn255 carries N-linked (GlcNAc...) asparagine glycosylation. The helical transmembrane segment at 279–299 (PHTFILGCSFLSFILITRFIG) threads the bilayer. The Cytoplasmic portion of the chain corresponds to 300–304 (KKYKK). The helical transmembrane segment at 305 to 325 (LFWLPAIAPLIAVVVSTLMVF) threads the bilayer. At 326–360 (LTKADEHGVKTVRHIKGGLNPMSIQDLDFNTPHLG) the chain is on the extracellular side. A helical transmembrane segment spans residues 361 to 381 (QIAKIGLIIAIVALTEAIAVG). Residues 382–397 (RSFAGIKGYRLDGNKE) are Cytoplasmic-facing. A helical membrane pass occupies residues 398 to 418 (MVAIGFMNVLGSFTSCYAATG). Over 419-426 (SFSRTAVN) the chain is Extracellular. A helical membrane pass occupies residues 427 to 447 (FAAGCETAMSNIVMAVTVFVA). Topologically, residues 448-454 (LECLTRL) are cytoplasmic. A helical transmembrane segment spans residues 455 to 475 (LYYTPIAILASIILSALPGLI). At 476–490 (NINEAIHIWKVDKFD) the chain is on the extracellular side. Residues 491–511 (FLALIGAFFGVLFASVEIGLL) form a helical membrane-spanning segment. At 512-677 (VAVVISFAKI…ALDACFGLKV (166 aa)) the chain is on the cytoplasmic side. In terms of domain architecture, STAS spans 548–672 (YPMTVKTPGV…LTIGEALDAC (125 aa)).

This sequence belongs to the SLC26A/SulP transporter (TC 2.A.53) family. Expressed in root cap, central cylinder of roots and in vascular tissues of leaves.

The protein localises to the membrane. Functionally, low-affinity H(+)/sulfate cotransporter that may be involved in root-to-shoot translocation of sulfate. Plays a central role in the regulation of sulfate assimilation. The protein is Sulfate transporter 2.1 (SULTR2;1) of Arabidopsis thaliana (Mouse-ear cress).